A 383-amino-acid polypeptide reads, in one-letter code: tRNA-specific 2-thiouridylase MnmA (383 aa).

ATP is bound by residues 29–36 (GMSGGVDS) and Met55. The tract at residues 115 to 117 (NPD) is interaction with target base in tRNA. The active-site Nucleophile is Cys120. Cys120 and Cys217 are oxidised to a cystine. Gly145 contacts ATP. The interaction with tRNA stretch occupies residues 167-169 (KDQ). The Cysteine persulfide intermediate role is filled by Cys217. The interval 329–330 (RY) is interaction with tRNA.

Belongs to the MnmA/TRMU family.

Its subcellular location is the cytoplasm. The catalysed reaction is S-sulfanyl-L-cysteinyl-[protein] + uridine(34) in tRNA + AH2 + ATP = 2-thiouridine(34) in tRNA + L-cysteinyl-[protein] + A + AMP + diphosphate + H(+). In terms of biological role, catalyzes the 2-thiolation of uridine at the wobble position (U34) of tRNA, leading to the formation of s(2)U34. This chain is tRNA-specific 2-thiouridylase MnmA, found in Histophilus somni (strain 2336) (Haemophilus somnus).